Consider the following 227-residue polypeptide: Uracil-DNA glycosylase (227 aa).

D65 acts as the Proton acceptor in catalysis.

It belongs to the uracil-DNA glycosylase (UDG) superfamily. UNG family.

The protein localises to the cytoplasm. It catalyses the reaction Hydrolyzes single-stranded DNA or mismatched double-stranded DNA and polynucleotides, releasing free uracil.. In terms of biological role, excises uracil residues from the DNA which can arise as a result of misincorporation of dUMP residues by DNA polymerase or due to deamination of cytosine. The sequence is that of Uracil-DNA glycosylase from Lactobacillus delbrueckii subsp. bulgaricus (strain ATCC 11842 / DSM 20081 / BCRC 10696 / JCM 1002 / NBRC 13953 / NCIMB 11778 / NCTC 12712 / WDCM 00102 / Lb 14).